Reading from the N-terminus, the 361-residue chain is Divinyl chlorophyll a/b light-harvesting protein PcbD (361 aa).

The next 6 membrane-spanning stretches (helical) occupy residues 27 to 47 (FIAS…GSTL), 93 to 113 (IVHL…GILF), 140 to 160 (FILG…VEWA), 201 to 221 (VMGG…FHIV), 248 to 268 (AVLS…AFWC), and 315 to 335 (LTNV…WHAL).

This sequence belongs to the PsbB/PsbC family. IsiA/Pcb subfamily. The antenna complex consists of divinyl chlorophylls (a and b) and divinyl chlorophyll a/b binding proteins and binds more divinyl chlorophyll b than does the antenna complex from high-light-adapted Prochlorococcus. Requires divinyl chlorophyll a as cofactor. Divinyl chlorophyll b is required as a cofactor.

The protein localises to the cellular thylakoid membrane. The antenna complex functions as a light receptor, it captures and delivers excitation energy to photosystems II and I. The Prochlorales pcb genes are not related to higher plant LHCs. This Prochlorococcus marinus (strain SARG / CCMP1375 / SS120) protein is Divinyl chlorophyll a/b light-harvesting protein PcbD (pcbD).